We begin with the raw amino-acid sequence, 295 residues long: N-acetylmuramic acid 6-phosphate etherase (295 aa).

Positions 53–216 (AIQRFNNGGR…STMTMIGVGK (164 aa)) constitute an SIS domain. Glutamate 81 acts as the Proton donor in catalysis. Residue glutamate 112 is part of the active site.

This sequence belongs to the GCKR-like family. MurNAc-6-P etherase subfamily. Homodimer.

It catalyses the reaction N-acetyl-D-muramate 6-phosphate + H2O = N-acetyl-D-glucosamine 6-phosphate + (R)-lactate. The protein operates within amino-sugar metabolism; N-acetylmuramate degradation. Specifically catalyzes the cleavage of the D-lactyl ether substituent of MurNAc 6-phosphate, producing GlcNAc 6-phosphate and D-lactate. The sequence is that of N-acetylmuramic acid 6-phosphate etherase from Staphylococcus epidermidis (strain ATCC 35984 / DSM 28319 / BCRC 17069 / CCUG 31568 / BM 3577 / RP62A).